Consider the following 156-residue polypeptide: Small ribosomal subunit protein uS7 (156 aa).

The protein belongs to the universal ribosomal protein uS7 family. Part of the 30S ribosomal subunit. Contacts proteins S9 and S11.

One of the primary rRNA binding proteins, it binds directly to 16S rRNA where it nucleates assembly of the head domain of the 30S subunit. Is located at the subunit interface close to the decoding center, probably blocks exit of the E-site tRNA. The polypeptide is Small ribosomal subunit protein uS7 (Bradyrhizobium sp. (strain BTAi1 / ATCC BAA-1182)).